A 214-amino-acid chain; its full sequence is Quinolone resistance pentapeptide repeat protein QnrB96 (214 aa).

2 consecutive Pentapeptide repeat domains span residues Ser-23 to Asn-103 and Ile-116 to Val-189.

The protein belongs to the pentapeptide repeat protein family.

Its function is as follows. Confers reduced sensitivity to the fluoroquinolone antibiotic ciprofloxacin (five-fold increase in minimum inhibitory concentration) when expressed in E.coli. The protein is Quinolone resistance pentapeptide repeat protein QnrB96 of Scandinavium goeteborgense.